Consider the following 402-residue polypeptide: Protochlorophyllide reductase B, chloroplastic (402 aa).

It belongs to the short-chain dehydrogenases/reductases (SDR) family. POR subfamily.

The protein resides in the plastid. It is found in the chloroplast. The catalysed reaction is chlorophyllide a + NADP(+) = protochlorophyllide a + NADPH + H(+). The protein operates within porphyrin-containing compound metabolism; chlorophyll biosynthesis. In terms of biological role, phototransformation of protochlorophyllide (Pchlide) to chlorophyllide (Chlide). The protein is Protochlorophyllide reductase B, chloroplastic (PORB) of Oryza sativa subsp. japonica (Rice).